Here is a 260-residue protein sequence, read N- to C-terminus: uncharacterized protein (260 aa).

This is an uncharacterized protein from Methanocaldococcus jannaschii (strain ATCC 43067 / DSM 2661 / JAL-1 / JCM 10045 / NBRC 100440) (Methanococcus jannaschii).